A 328-amino-acid polypeptide reads, in one-letter code: uncharacterized protein (328 aa).

This is an uncharacterized protein from Schizosaccharomyces pombe (strain 972 / ATCC 24843) (Fission yeast).